Reading from the N-terminus, the 124-residue chain is Small ribosomal subunit protein uS13 (124 aa).

The interval 95-124 (GLPVRGQRTRHNARTRKGPRKTVGAKKGKR) is disordered. The segment covering 101–124 (QRTRHNARTRKGPRKTVGAKKGKR) has biased composition (basic residues).

Belongs to the universal ribosomal protein uS13 family. Part of the 30S ribosomal subunit. Forms a loose heterodimer with protein S19. Forms two bridges to the 50S subunit in the 70S ribosome.

Functionally, located at the top of the head of the 30S subunit, it contacts several helices of the 16S rRNA. In the 70S ribosome it contacts the 23S rRNA (bridge B1a) and protein L5 of the 50S subunit (bridge B1b), connecting the 2 subunits; these bridges are implicated in subunit movement. Contacts the tRNAs in the A and P-sites. The chain is Small ribosomal subunit protein uS13 from Coprothermobacter proteolyticus (strain ATCC 35245 / DSM 5265 / OCM 4 / BT).